We begin with the raw amino-acid sequence, 147 residues long: Acidic phospholipase A2 beta-bungarotoxin A4 chain (147 aa).

The first 19 residues, 1 to 19 (MNPAHLLVLSAVCVSLLGA), serve as a signal peptide directing secretion. Residues 20–27 (ANIPPQHL) constitute a propeptide that is removed on maturation. 6 disulfide bridges follow: Cys54–Cys146, Cys56–Cys72, Cys71–Cys127, Cys78–Cys120, Cys88–Cys113, and Cys106–Cys118. Positions 55, 57, and 59 each coordinate Ca(2+). Residue His75 is part of the active site. Asp76 contributes to the Ca(2+) binding site. Asp121 is a catalytic residue.

The protein belongs to the phospholipase A2 family. Group I subfamily. D49 sub-subfamily. Heterodimer; disulfide-linked. The A chains have phospholipase A2 activity and the B chains show homology with the basic protease inhibitors. It depends on Ca(2+) as a cofactor. In terms of tissue distribution, expressed by the venom gland.

It localises to the secreted. The catalysed reaction is a 1,2-diacyl-sn-glycero-3-phosphocholine + H2O = a 1-acyl-sn-glycero-3-phosphocholine + a fatty acid + H(+). In terms of biological role, snake venom phospholipase A2 (PLA2) that inhibits neuromuscular transmission by blocking acetylcholine release from the nerve termini. PLA2 catalyzes the calcium-dependent hydrolysis of the 2-acyl groups in 3-sn-phosphoglycerides. The protein is Acidic phospholipase A2 beta-bungarotoxin A4 chain of Bungarus multicinctus (Many-banded krait).